The following is a 153-amino-acid chain: Myoglobin (153 aa).

Residues 2–147 (GLNDQEWQQV…FRNDMASKYK (146 aa)) enclose the Globin domain. Histidine 65 is a nitrite binding site. Residue histidine 65 participates in O2 binding. Heme b is bound at residue histidine 93.

It belongs to the globin family. Monomeric.

The protein resides in the cytoplasm. It localises to the sarcoplasm. It carries out the reaction Fe(III)-heme b-[protein] + nitric oxide + H2O = Fe(II)-heme b-[protein] + nitrite + 2 H(+). It catalyses the reaction H2O2 + AH2 = A + 2 H2O. Functionally, monomeric heme protein which primary function is to store oxygen and facilitate its diffusion within muscle tissues. Reversibly binds oxygen through a pentacoordinated heme iron and enables its timely and efficient release as needed during periods of heightened demand. Depending on the oxidative conditions of tissues and cells, and in addition to its ability to bind oxygen, it also has a nitrite reductase activity whereby it regulates the production of bioactive nitric oxide. Under stress conditions, like hypoxia and anoxia, it also protects cells against reactive oxygen species thanks to its pseudoperoxidase activity. The sequence is that of Myoglobin (MB) from Aptenodytes forsteri (Emperor penguin).